The following is an 851-amino-acid chain: Glycogen phosphorylase, liver form (851 aa).

Ala2 is subject to N-acetylalanine. Position 15 is a phosphoserine; by PHK; in form phosphorylase a (Ser15). AMP-binding positions include 43 to 45 (DRN), Tyr76, and Arg310. Residue Lys364 is modified to N6-succinyllysine. Lys470 is subject to N6-acetyllysine. Ser524, Ser561, and Ser639 each carry phosphoserine. Position 681 is an N6-(pyridoxal phosphate)lysine (Lys681). N6-acetyllysine is present on Lys796.

This sequence belongs to the glycogen phosphorylase family. Homodimer; enzymatically active. Interacts with PPP1R3B; recruits the phosphatase PP1 which dephosphorylates and inactivates PYGL/glycogen phosphorylase. Requires pyridoxal 5'-phosphate as cofactor. Post-translationally, acetylation, which is up-regulated by glucose and insulin and down-regulated by glucagon, inhibits the glycogen phosphorylase activity by promoting PPP1R3B-mediated recruitment of phosphatase PP1 and Ser-15 dephosphorylation. In terms of processing, phosphorylation at Ser-15 converts inactive phosphorylase b into active phosphorylase a. Dephosphorylation of Ser-15 by phosphatase PP1 inactivates the enzyme.

The protein resides in the cytoplasm. It is found in the cytosol. It carries out the reaction [(1-&gt;4)-alpha-D-glucosyl](n) + phosphate = [(1-&gt;4)-alpha-D-glucosyl](n-1) + alpha-D-glucose 1-phosphate. Allosterically regulated through the non-covalent binding of metabolites, being activated by AMP and inhibited by ATP, ADP, and glucose-6-phosphate. The activity is also controlled by post-translational modifications including phosphorylation and acetylation. Its function is as follows. Allosteric enzyme that catalyzes the rate-limiting step in glycogen catabolism, the phosphorolytic cleavage of glycogen to produce glucose-1-phosphate, and plays a central role in maintaining cellular and organismal glucose homeostasis. This Bos taurus (Bovine) protein is Glycogen phosphorylase, liver form.